The chain runs to 1521 residues: Retroelement silencing factor 1 (1521 aa).

A Glycyl lysine isopeptide (Lys-Gly) (interchain with G-Cter in SUMO2) cross-link involves residue K223. Residues 621–640 are disordered; the sequence is EKQHKPIQGDPDIADSSLGK. S910 carries the phosphoserine modification. Residue T996 is modified to Phosphothreonine. Composition is skewed to polar residues over residues 1093–1105 and 1124–1142; these read KNMP…SQES and LSSN…QSVS. 3 disordered regions span residues 1093 to 1147, 1204 to 1230, and 1312 to 1335; these read KNMP…EKKK, ERAS…KSTR, and EASR…PDKM. S1142 bears the Phosphoserine mark. The segment covering 1214–1228 has biased composition (low complexity); the sequence is PSPESSDPKGSSSKS. Positions 1325 to 1335 are enriched in basic and acidic residues; it reads GKFDGKQPDKM. Residue K1411 forms a Glycyl lysine isopeptide (Lys-Gly) (interchain with G-Cter in SUMO2) linkage. Disordered stretches follow at residues 1425 to 1444 and 1457 to 1485; these read DKQD…VQVS and IPTR…SADE. Residues 1467–1476 are compositionally biased toward basic and acidic residues; that stretch reads SQRDSADSRL. Residues S1482 and S1514 each carry the phosphoserine modification.

In terms of assembly, interacts with SETDB1.

The protein localises to the nucleus. In terms of biological role, plays a role in the regulation of imprinted gene expression, regulates repressive epigenetic modifications associated with SETDB1. Required for the recruitment or accumulation of SETDB1 to the endogenous retroviruses (ERVs) and maintenance of repressive chromatin configuration, contributing to a subset of the SETDB1-dependent ERV silencing in embryonic stem cells. In Mus musculus (Mouse), this protein is Retroelement silencing factor 1.